The following is a 337-amino-acid chain: D-alanine--D-alanine ligase (337 aa).

Residues 124–330 (KMWFSALGIP…FTEYLSLVIN (207 aa)) form the ATP-grasp domain. Position 154–209 (154–209 (ALANWGSIFIKAASQGSSVGCYKVDDSSKVAQVLKDAFGYAPYVVVEKTIKARELE)) interacts with ATP. Residues D284, E297, and N299 each contribute to the Mg(2+) site.

Belongs to the D-alanine--D-alanine ligase family. The cofactor is Mg(2+). Mn(2+) serves as cofactor.

The protein localises to the cytoplasm. The catalysed reaction is 2 D-alanine + ATP = D-alanyl-D-alanine + ADP + phosphate + H(+). It functions in the pathway cell wall biogenesis; peptidoglycan biosynthesis. Cell wall formation. The polypeptide is D-alanine--D-alanine ligase (Shewanella sp. (strain W3-18-1)).